A 283-amino-acid chain; its full sequence is Thymidylate synthase (283 aa).

Residue Arg-22 coordinates dUMP. Residue Cys-160 is the Nucleophile of the active site. DUMP is bound by residues Arg-180–Asp-183, Asn-191, and His-221–Tyr-223. Asp-183 is a binding site for (6R)-5,10-methylene-5,6,7,8-tetrahydrofolate. Ser-282 provides a ligand contact to (6R)-5,10-methylene-5,6,7,8-tetrahydrofolate.

Belongs to the thymidylate synthase family. Bacterial-type ThyA subfamily. Homodimer.

The protein resides in the cytoplasm. The enzyme catalyses dUMP + (6R)-5,10-methylene-5,6,7,8-tetrahydrofolate = 7,8-dihydrofolate + dTMP. It participates in pyrimidine metabolism; dTTP biosynthesis. In terms of biological role, catalyzes the reductive methylation of 2'-deoxyuridine-5'-monophosphate (dUMP) to 2'-deoxythymidine-5'-monophosphate (dTMP) while utilizing 5,10-methylenetetrahydrofolate (mTHF) as the methyl donor and reductant in the reaction, yielding dihydrofolate (DHF) as a by-product. This enzymatic reaction provides an intracellular de novo source of dTMP, an essential precursor for DNA biosynthesis. The protein is Thymidylate synthase of Shewanella loihica (strain ATCC BAA-1088 / PV-4).